A 245-amino-acid polypeptide reads, in one-letter code: 1-(5-phosphoribosyl)-5-[(5-phosphoribosylamino)methylideneamino] imidazole-4-carboxamide isomerase (245 aa).

Aspartate 7 functions as the Proton acceptor in the catalytic mechanism. Aspartate 129 serves as the catalytic Proton donor.

The protein belongs to the HisA/HisF family.

It localises to the cytoplasm. The catalysed reaction is 1-(5-phospho-beta-D-ribosyl)-5-[(5-phospho-beta-D-ribosylamino)methylideneamino]imidazole-4-carboxamide = 5-[(5-phospho-1-deoxy-D-ribulos-1-ylimino)methylamino]-1-(5-phospho-beta-D-ribosyl)imidazole-4-carboxamide. It participates in amino-acid biosynthesis; L-histidine biosynthesis; L-histidine from 5-phospho-alpha-D-ribose 1-diphosphate: step 4/9. The chain is 1-(5-phosphoribosyl)-5-[(5-phosphoribosylamino)methylideneamino] imidazole-4-carboxamide isomerase from Klebsiella pneumoniae subsp. pneumoniae (strain ATCC 700721 / MGH 78578).